Reading from the N-terminus, the 452-residue chain is Poly(A) polymerase I (452 aa).

Active-site residues include D68, D70, and D150. Residues 427-452 (EQQRLHPKPKKKYYRPRRRKTTCSAE) form a disordered region. Over residues 431–452 (LHPKPKKKYYRPRRRKTTCSAE) the composition is skewed to basic residues.

The protein belongs to the tRNA nucleotidyltransferase/poly(A) polymerase family.

It carries out the reaction RNA(n) + ATP = RNA(n)-3'-adenine ribonucleotide + diphosphate. Adds poly(A) tail to the 3' end of many RNAs, which usually targets these RNAs for decay. Plays a significant role in the global control of gene expression, through influencing the rate of transcript degradation, and in the general RNA quality control. The protein is Poly(A) polymerase I of Haemophilus influenzae (strain ATCC 51907 / DSM 11121 / KW20 / Rd).